The primary structure comprises 299 residues: Trans-aconitate 3-methyltransferase (299 aa).

Residue S2 is modified to N-acetylserine.

It belongs to the methyltransferase superfamily. Tam family.

The protein localises to the cytoplasm. The catalysed reaction is trans-aconitate + S-adenosyl-L-methionine = (E)-2-(methoxycarbonylmethyl)but-2-enedioate + S-adenosyl-L-homocysteine. Its function is as follows. Catalyzes the S-adenosylmethionine monomethyl esterification of trans-aconitate and 3-isopropylmalate at high affinity and of other molecules like cis-aconitate, isocitrate, and citrate at lower velocities and affinities. The function of trans-aconitate methylation appears to be in reducing the toxicity of this spontaneous breakdown product of cis-aconitate. The role of 3-isopropylmalate methylation is unclear but may represent a metabolic branch at 3-isopropylmalate, where some of the material is taken in the pathway leading to leucine and some is taken in a pathway to the 3-isopropylmalate methyl ester, a molecule that provides a signal to switch from vegetative to invasive growth in response to amino acid starvation. This chain is Trans-aconitate 3-methyltransferase (TMT1), found in Saccharomyces cerevisiae (strain ATCC 204508 / S288c) (Baker's yeast).